The chain runs to 476 residues: MATKLESFKVVEKLGVEKGEKGKMMSKKKNVKKDGDESESGFWFRFKFIFSCISSRSKVDSSMNATAVIAEPKKVIEKLEGHPAPTKDTGCAESGSSTPLMSGELKYSSKLRIFMFNDLKLATRNFRPESLLGEGGFGCVFKGWIEENGTAPVKPGTGLTVAVKTLNPDGLQGHKEWLAEINFLGNLVHPSLVKLVGYCMEEDQRLLVYEFMPRGSLENHLFRRTLPLPWSVRMKIALGAAKGLAFLHEEAEKPVIYRDFKTSNILLDGEYNAKLSDFGLAKDAPDEKKSHVSTRVMGTYGYAAPEYVMTGHLTTKSDVYSFGVVLLEILTGRRSVDKSRPNGEQNLVEWVRPHLLDKKRFYRLLDPRLEGHYSIKGAQKATQVAAQCLNRDSKARPKMSEVVEALKPLPNLKDFASSSSSFQTMQPVAKNGVRTQGGGFVSRNGPPMRSLSSLNLPQASPYRYARQSPKPKGKEP.

A Protein kinase domain is found at 126–412; sequence FRPESLLGEG…VEALKPLPNL (287 aa). Residues 132 to 140 and Lys164 each bind ATP; that span reads LGEGGFGCV. Tyr209 is modified (phosphotyrosine). The active-site Proton acceptor is Asp259. Residues Ser263 and Ser293 each carry the phosphoserine modification. Thr294 and Thr299 each carry phosphothreonine. Position 307 is a phosphotyrosine (Tyr307). Residues 431–476 form a disordered region; sequence NGVRTQGGGFVSRNGPPMRSLSSLNLPQASPYRYARQSPKPKGKEP.

It belongs to the protein kinase superfamily. Ser/Thr protein kinase family. As to quaternary structure, interacts with SD129. Phosphorylated by SD129 in response to the pathogen-associated molecular pattern (PAMP) 3-OH-C10:0, a medium-chain 3-hydroxy fatty acid.

The protein resides in the cell membrane. The enzyme catalyses L-seryl-[protein] + ATP = O-phospho-L-seryl-[protein] + ADP + H(+). The catalysed reaction is L-threonyl-[protein] + ATP = O-phospho-L-threonyl-[protein] + ADP + H(+). Its function is as follows. Involved in chitin-triggered immune signaling and is required for reactive oxygen species (ROS) production. Acts downstream of SD129 in defense signaling triggered by the pathogen-associated molecular pattern (PAMP) 3-OH-C10:0, a medium-chain 3-hydroxy fatty acid. The sequence is that of Serine/threonine-protein kinase PBL36 from Arabidopsis thaliana (Mouse-ear cress).